Here is a 391-residue protein sequence, read N- to C-terminus: Histidinol-phosphate aminotransferase (391 aa).

The residue at position 246 (Lys-246) is an N6-(pyridoxal phosphate)lysine.

Belongs to the class-II pyridoxal-phosphate-dependent aminotransferase family. Histidinol-phosphate aminotransferase subfamily. Pyridoxal 5'-phosphate is required as a cofactor.

It catalyses the reaction L-histidinol phosphate + 2-oxoglutarate = 3-(imidazol-4-yl)-2-oxopropyl phosphate + L-glutamate. The protein operates within amino-acid biosynthesis; L-histidine biosynthesis; L-histidine from 5-phospho-alpha-D-ribose 1-diphosphate: step 7/9. The chain is Histidinol-phosphate aminotransferase from Methanopyrus kandleri (strain AV19 / DSM 6324 / JCM 9639 / NBRC 100938).